The following is a 60-amino-acid chain: Large ribosomal subunit protein bL32 (60 aa).

It belongs to the bacterial ribosomal protein bL32 family.

The protein is Large ribosomal subunit protein bL32 of Geobacter sulfurreducens (strain ATCC 51573 / DSM 12127 / PCA).